Reading from the N-terminus, the 336-residue chain is Homeobox-leucine zipper protein HAT14 (336 aa).

Disordered stretches follow at residues 53 to 141 and 160 to 194; these read RSLS…PDSV and SNKR…KLRL. Residues 64 to 81 show a composition bias toward basic and acidic residues; the sequence is EDEKKKPAPRAKKSDEFR. The segment covering 120–129 has biased composition (acidic residues); the sequence is VEEEEEEEEA. Residues 130–141 are compositionally biased toward low complexity; the sequence is VPSMSVSPPDSV. Residues 160–173 show a composition bias toward basic and acidic residues; sequence SNKRDIDDEVERSA. The homeobox DNA-binding region spans 187–246; that stretch reads STRKKLRLSKDQSAFLEDSFKEHSTLNPKQKIALAKQLNLRPRQVEVWFQNRRARTKLKQ. The segment at 254–275 is leucine-zipper; that stretch reads LKRCCESLTEENRRLQKEVKEL.

The protein belongs to the HD-ZIP homeobox family. Class II subfamily.

It is found in the nucleus. Probable transcription factor. The sequence is that of Homeobox-leucine zipper protein HAT14 (HAT14) from Arabidopsis thaliana (Mouse-ear cress).